A 485-amino-acid polypeptide reads, in one-letter code: GlcNAc-binding protein A (485 aa).

The first 29 residues, 1 to 29, serve as a signal peptide directing secretion; sequence MKKQPQKTLLAIALSVVSGTAMSHGYVSA. In terms of domain architecture, Chitin-binding type-4 spans 30 to 200; that stretch reads VENGVAEARV…SFYNVIDVKF (171 aa). The Chitin-binding type-3 domain maps to 437–478; that stretch reads ADTKVLASDGAIYQCKPFPYSGYCVQWTPTATQYQPGTGSHW.

The protein belongs to the GbpA family.

It is found in the secreted. Probably interacts with GlcNAc residues. May promote attachment to both epithelial cell surfaces and chitin. The polypeptide is GlcNAc-binding protein A (Vibrio vulnificus (strain CMCP6)).